The chain runs to 832 residues: FAST kinase domain-containing protein 1, mitochondrial (832 aa).

Residues 765 to 825 (VAIEFLDSKA…KDAWIDYLRK (61 aa)) form the RAP domain.

The protein belongs to the FAST kinase family.

The protein resides in the mitochondrion. In terms of biological role, may regulate the stability of some mitochondrial mRNA species. The sequence is that of FAST kinase domain-containing protein 1, mitochondrial (fastkd1) from Xenopus tropicalis (Western clawed frog).